A 219-amino-acid polypeptide reads, in one-letter code: Uracil phosphoribosyltransferase 1 (219 aa).

Residues arginine 33, arginine 42, and 76–79 each bind GTP; that span reads DGRI. Position 86 (arginine 86) interacts with 5-phospho-alpha-D-ribose 1-diphosphate. GTP is bound at residue arginine 103. Arginine 111 provides a ligand contact to 5-phospho-alpha-D-ribose 1-diphosphate. Arginine 132 contributes to the GTP binding site. 5-phospho-alpha-D-ribose 1-diphosphate contacts are provided by residues aspartate 138 and 138 to 146; that span reads DPMLATGGS. Tyrosine 202 is a binding site for D-ribose 5-phosphate. Residues isoleucine 203 and 208–210 each bind uracil; that span reads GDF. Position 209 (aspartate 209) interacts with 5-phospho-alpha-D-ribose 1-diphosphate.

The protein belongs to the UPRTase family. The cofactor is Mg(2+).

It carries out the reaction UMP + diphosphate = 5-phospho-alpha-D-ribose 1-diphosphate + uracil. Its pathway is pyrimidine metabolism; UMP biosynthesis via salvage pathway; UMP from uracil: step 1/1. With respect to regulation, allosterically activated by GTP. In terms of biological role, catalyzes the conversion of uracil and 5-phospho-alpha-D-ribose 1-diphosphate (PRPP) to UMP and diphosphate. This is Uracil phosphoribosyltransferase 1 from Schizosaccharomyces pombe (strain 972 / ATCC 24843) (Fission yeast).